A 300-amino-acid polypeptide reads, in one-letter code: Probable L-serine dehydratase, alpha chain (300 aa).

Belongs to the iron-sulfur dependent L-serine dehydratase family. In terms of assembly, heterodimer of an alpha chain and a beta chain. [4Fe-4S] cluster is required as a cofactor.

The catalysed reaction is L-serine = pyruvate + NH4(+). The protein operates within carbohydrate biosynthesis; gluconeogenesis. The protein is Probable L-serine dehydratase, alpha chain (sdaAA) of Bacillus subtilis (strain 168).